The primary structure comprises 339 residues: Phenylalanine--tRNA ligase alpha subunit (339 aa).

Glu250 contributes to the Mg(2+) binding site.

This sequence belongs to the class-II aminoacyl-tRNA synthetase family. Phe-tRNA synthetase alpha subunit type 1 subfamily. Tetramer of two alpha and two beta subunits. It depends on Mg(2+) as a cofactor.

Its subcellular location is the cytoplasm. The enzyme catalyses tRNA(Phe) + L-phenylalanine + ATP = L-phenylalanyl-tRNA(Phe) + AMP + diphosphate + H(+). The polypeptide is Phenylalanine--tRNA ligase alpha subunit (Bacteroides thetaiotaomicron (strain ATCC 29148 / DSM 2079 / JCM 5827 / CCUG 10774 / NCTC 10582 / VPI-5482 / E50)).